Consider the following 203-residue polypeptide: MSKIIIATANKGKAKEFEKIFAKFNIEVATLADFPEIGEIEETGTTFAENAALKAETVASVLNQTVIADDSGLIVDALDGAPGVYSARYAGIAHDDAKNNEKLLKNLEGVEPDKRTARFHCTLAVATPSEKTSFYTGEVEGVIAEQLCGTNGFGYDPLFFLPEFGLTMAEIPAEKKNEISHRANAIKQLEKDLAEVVEKVTKK.

8–13 (TANKGK) provides a ligand contact to substrate. Mg(2+) is bound by residues E41 and D70. D70 functions as the Proton acceptor in the catalytic mechanism. Residues S71, 153 to 156 (FGYD), K176, and 181 to 182 (HR) each bind substrate.

It belongs to the HAM1 NTPase family. In terms of assembly, homodimer. Mg(2+) serves as cofactor.

The catalysed reaction is XTP + H2O = XMP + diphosphate + H(+). It carries out the reaction dITP + H2O = dIMP + diphosphate + H(+). The enzyme catalyses ITP + H2O = IMP + diphosphate + H(+). Its function is as follows. Pyrophosphatase that catalyzes the hydrolysis of nucleoside triphosphates to their monophosphate derivatives, with a high preference for the non-canonical purine nucleotides XTP (xanthosine triphosphate), dITP (deoxyinosine triphosphate) and ITP. Seems to function as a house-cleaning enzyme that removes non-canonical purine nucleotides from the nucleotide pool, thus preventing their incorporation into DNA/RNA and avoiding chromosomal lesions. This is dITP/XTP pyrophosphatase from Listeria monocytogenes serotype 4b (strain F2365).